The chain runs to 219 residues: Large ribosomal subunit protein bL25 (219 aa).

Positions 193–219 are disordered; sequence VSSTELEETPEVPASAVPTTDQGESAE. A compositionally biased stretch (polar residues) spans 209–219; the sequence is VPTTDQGESAE.

Belongs to the bacterial ribosomal protein bL25 family. CTC subfamily. As to quaternary structure, part of the 50S ribosomal subunit; part of the 5S rRNA/L5/L18/L25 subcomplex. Contacts the 5S rRNA. Binds to the 5S rRNA independently of L5 and L18.

Functionally, this is one of the proteins that binds to the 5S RNA in the ribosome where it forms part of the central protuberance. The sequence is that of Large ribosomal subunit protein bL25 from Legionella pneumophila (strain Corby).